We begin with the raw amino-acid sequence, 339 residues long: Dihydroorotate dehydrogenase (quinone) (339 aa).

FMN contacts are provided by residues 62–66 and T86; that span reads AGMDK. A substrate-binding site is contributed by K66. 111 to 115 lines the substrate pocket; the sequence is NRMGF. Residues N139 and N172 each coordinate FMN. Residue N172 participates in substrate binding. Catalysis depends on S175, which acts as the Nucleophile. A substrate-binding site is contributed by N177. Positions 217 and 245 each coordinate FMN. 246–247 is a binding site for substrate; sequence NT. Residues G268, G297, and 318 to 319 contribute to the FMN site; that span reads YS.

Belongs to the dihydroorotate dehydrogenase family. Type 2 subfamily. In terms of assembly, monomer. FMN serves as cofactor.

Its subcellular location is the cell membrane. It carries out the reaction (S)-dihydroorotate + a quinone = orotate + a quinol. It functions in the pathway pyrimidine metabolism; UMP biosynthesis via de novo pathway; orotate from (S)-dihydroorotate (quinone route): step 1/1. Functionally, catalyzes the conversion of dihydroorotate to orotate with quinone as electron acceptor. The polypeptide is Dihydroorotate dehydrogenase (quinone) (Shewanella sp. (strain ANA-3)).